The sequence spans 1070 residues: DNA-directed RNA polymerase subunit beta (1070 aa).

Belongs to the RNA polymerase beta chain family. In plastids the minimal PEP RNA polymerase catalytic core is composed of four subunits: alpha, beta, beta', and beta''. When a (nuclear-encoded) sigma factor is associated with the core the holoenzyme is formed, which can initiate transcription.

It localises to the plastid. It is found in the chloroplast. It carries out the reaction RNA(n) + a ribonucleoside 5'-triphosphate = RNA(n+1) + diphosphate. Its function is as follows. DNA-dependent RNA polymerase catalyzes the transcription of DNA into RNA using the four ribonucleoside triphosphates as substrates. This is DNA-directed RNA polymerase subunit beta from Gossypium hirsutum (Upland cotton).